The following is a 330-amino-acid chain: Exostosin-like 2 (330 aa).

Over 1–21 the chain is Cytoplasmic; it reads MMRGCHICKLPGRVMGIRVLR. Residues 22–42 form a helical; Signal-anchor for type II membrane protein membrane-spanning segment; that stretch reads FSLVVILVLLLVAGALTNLLP. Topologically, residues 43–330 are lumenal; it reads NIKEDKMLTL…FPYANHKSKM (288 aa). Glutamine 72 contributes to the UDP-N-acetyl-alpha-D-galactosamine binding site. Residue glutamine 72 participates in UDP-N-acetyl-alpha-D-glucosamine binding. Asparagine 75 carries N-linked (GlcNAc...) asparagine glycosylation. The UDP-N-acetyl-alpha-D-galactosamine site is built by arginine 76, asparagine 101, asparagine 130, arginine 135, aspartate 151, aspartate 152, aspartate 153, and aspartate 245. The UDP-N-acetyl-alpha-D-glucosamine site is built by arginine 76, asparagine 101, asparagine 130, arginine 135, aspartate 151, aspartate 152, aspartate 153, aspartate 245, aspartate 246, and arginine 293. Residue aspartate 153 participates in Mn(2+) binding. A disulfide bridge connects residues cysteine 244 and cysteine 296. Aspartate 246 is a catalytic residue. Arginine 293 contacts UDP-N-acetyl-alpha-D-galactosamine.

The protein belongs to the glycosyltransferase 47 family. Mn(2+) is required as a cofactor.

It localises to the endoplasmic reticulum membrane. The catalysed reaction is 3-O-(beta-D-GlcA-(1-&gt;3)-beta-D-Gal-(1-&gt;3)-beta-D-Gal-(1-&gt;4)-beta-D-Xyl)-L-seryl-[protein] + UDP-N-acetyl-alpha-D-glucosamine = 3-O-(alpha-D-GlcNAc-(1-&gt;4)-beta-D-GlcA-(1-&gt;3)-beta-D-Gal-(1-&gt;3)-beta-D-Gal-(1-&gt;4)-beta-D-Xyl)-L-seryl-[protein] + UDP + H(+). Functionally, glycosyltransferase required for the biosynthesis of heparan-sulfate and responsible for the alternating addition of beta-1-4-linked glucuronic acid (GlcA) and alpha-1-4-linked N-acetylglucosamine (GlcNAc) units to nascent heparan sulfate chains. In Mus musculus (Mouse), this protein is Exostosin-like 2 (Extl2).